The sequence spans 1248 residues: Apoptotic protease-activating factor 1 (1248 aa).

One can recognise a CARD domain in the interval 1–90; it reads MDAKARNCLL…KDLAALLHDG (90 aa). Residues 104 to 415 enclose the NB-ARC domain; sequence SGITSYVRTV…METEEVEDIL (312 aa). ATP contacts are provided by residues 154–161 and Arg-265; that span reads GMAGCGKS. Residues 613-652 form a WD 1-1 repeat; sequence PHTDAVYHACFSEDGQRIASCGADKTLQVFKAETGEKLLE. The stretch at 655 to 694 is one WD 1-2 repeat; it reads AHEDEVLCCAFSTDDRFIATCSVDKKVKIWNSMTGELVHT. The stretch at 697–738 is one WD 1-3 repeat; the sequence is EHSEQVNCCHFTNSSHHLLLATGSSDCFLKLWDLNQKECRNT. The WD 1-4 repeat unit spans residues 741-780; it reads GHTNSVNHCRFSPDDKLLASCSADGTLKLWDATSANERKS. The WD 1-5 repeat unit spans residues 796–836; sequence DMEVIVKCCSWSADGARIMVAAKNKIFLFDIHTSGLLGEIH. The stretch at 838–877 is one WD 1-6 repeat; sequence GHHSTIQYCDFSPQNHLAVVALSQYCVELWNTDSRSKVAD. The stretch at 880-910 is one WD 1-7 repeat; the sequence is GHLSWVHGVMFSPDGSSFLTSSDDQTIRLWE. An interpropeller linker region spans residues 910-921; it reads ETKKVCKNSAVM. The stretch at 922–958 is one WD 2-1 repeat; that stretch reads LKQEVDVVFQENEVMVLAVDHIRRLQLINGRTGQIDY. One copy of the WD 2-2 repeat lies at 959–998; sequence LTEAQVSCCCLSPHLQYIAFGDENGAIEILELVNNRIFQS. A WD 2-3 repeat occupies 1001–1040; it reads QHKKTVWHIQFTADEKTLISSSDDAEIQVWNWQLDKCIFL. The stretch at 1042–1080 is one WD 2-4 repeat; sequence GHQETVKDFRLLKNSRLLSWSFDGTVKVWNIITGNKEKD. The WD 2-5 repeat unit spans residues 1083 to 1122; sequence CHQGTVLSCDISHDATKFSSTSADKTAKIWSFDLLLPLHE. One copy of the WD 2-6 repeat lies at 1125–1164; it reads GHNGCVRCSAFSVDSTLLATGDDNGEIRIWNVSNGELLHL. A WD 2-7 repeat occupies 1175–1212; sequence THGGWVTDLCFSPDGKMLISAGGYIKWWNVVTGESSQT. A WD 2-8 repeat occupies 1213 to 1248; that stretch reads FYTNGTNLKKIHVSPDFKTYVTVDNLGILYILQTLE.

Monomer. Oligomerizes to a heptameric ring, known as the apoptosome, upon binding of cytochrome c and dATP. Oligomeric Apaf-1 and pro-caspase-9 bind to each other via their respective NH2-terminal CARD domains and consecutively mature caspase-9 is released from the complex. Pro-caspase-3 is recruited into the Apaf-1-pro-caspase-9 complex via interaction with pro-caspase-9. Interacts with APIP. Interacts (via CARD and NACHT domains) with NAIP/BIRC1 (via NACHT domain). Interacts with CIAO2A. As to expression, ubiquitous. Highest levels of expression in adult spleen and peripheral blood leukocytes, and in fetal brain, kidney and lung. Isoform 1 is expressed in heart, kidney and liver.

It is found in the cytoplasm. Oligomeric Apaf-1 mediates the cytochrome c-dependent autocatalytic activation of pro-caspase-9 (Apaf-3), leading to the activation of caspase-3 and apoptosis. This activation requires ATP. Isoform 6 is less effective in inducing apoptosis. This Homo sapiens (Human) protein is Apoptotic protease-activating factor 1.